Reading from the N-terminus, the 333-residue chain is Probable cytosolic iron-sulfur protein assembly protein ciao1-B (333 aa).

WD repeat units lie at residues His14 to Lys53, Gly59 to Leu98, Gly103 to Cys142, Ser148 to Arg187, Gly192 to Glu231, Phe246 to Gln285, and Ala297 to Val333.

Belongs to the WD repeat CIA1 family. As to quaternary structure, component of the CIA complex.

In terms of biological role, key component of the cytosolic iron-sulfur protein assembly (CIA) complex, a multiprotein complex that mediates the incorporation of iron-sulfur cluster into extramitochondrial Fe/S proteins. The protein is Probable cytosolic iron-sulfur protein assembly protein ciao1-B (ciao1b) of Salmo salar (Atlantic salmon).